Consider the following 475-residue polypeptide: Ribulose bisphosphate carboxylase large chain (475 aa).

A propeptide spanning residues 1–2 is cleaved from the precursor; the sequence is MS. Pro3 carries the post-translational modification N-acetylproline. N6,N6,N6-trimethyllysine is present on Lys14. 2 residues coordinate substrate: Asn123 and Thr173. The active-site Proton acceptor is Lys175. Lys177 is a binding site for substrate. Mg(2+) contacts are provided by Lys201, Asp203, and Glu204. Lys201 is modified (N6-carboxylysine). The Proton acceptor role is filled by His294. Positions 295, 327, and 379 each coordinate substrate.

Belongs to the RuBisCO large chain family. Type I subfamily. In terms of assembly, heterohexadecamer of 8 large chains and 8 small chains; disulfide-linked. The disulfide link is formed within the large subunit homodimers. Mg(2+) is required as a cofactor. The disulfide bond which can form in the large chain dimeric partners within the hexadecamer appears to be associated with oxidative stress and protein turnover.

The protein resides in the plastid. It is found in the chloroplast. The enzyme catalyses 2 (2R)-3-phosphoglycerate + 2 H(+) = D-ribulose 1,5-bisphosphate + CO2 + H2O. The catalysed reaction is D-ribulose 1,5-bisphosphate + O2 = 2-phosphoglycolate + (2R)-3-phosphoglycerate + 2 H(+). RuBisCO catalyzes two reactions: the carboxylation of D-ribulose 1,5-bisphosphate, the primary event in carbon dioxide fixation, as well as the oxidative fragmentation of the pentose substrate in the photorespiration process. Both reactions occur simultaneously and in competition at the same active site. This is Ribulose bisphosphate carboxylase large chain from Ostrya virginiana (American hophornbeam).